The following is a 423-amino-acid chain: MMSSVKKTICVLLVCFTMMSVMLLGPGVTEVSAASDAKVNISADRQVIRGFGGMNHPAWIGDLTAAQRETAFGNGQNQLGFSVLRIHVDENRNNWYKEVETAKSAIKHGAIVFASPWNPPNDMVETFNHNGDTSAKRLRYDKYAAYAQHLNDFVNFMKSNGVNLYAISMQNEPDYAHEWTWWTPQEILRFMRENAGSINARVIAPESFQYLKNISDPILNDPQALRNMDILGTHLYGTQVSQFPYPLFKQKGGGKELWMTEVYYPNSDNNSADRWPEALGVSEHIHHSMVEGDFQAYVWWYIRRSYGPMKEDGMISKRGYNMAHFSKFVRPGYVRIDATKNPEPNVYVSAYKGDNKVVIVAINKNNTGVNQNFVLQNGTASQVSRWITSSSSNLQPGTDLKVTDNHFWAHLPAQSVTTFVVKR.

The N-terminal stretch at 1 to 33 (MMSSVKKTICVLLVCFTMMSVMLLGPGVTEVSA) is a signal peptide. Glutamate 172 functions as the Proton donor in the catalytic mechanism. Catalysis depends on glutamate 261, which acts as the Nucleophile.

Belongs to the glycosyl hydrolase 30 family.

Its subcellular location is the secreted. The catalysed reaction is Endohydrolysis of (1-&gt;4)-beta-D-xylosyl links in some glucuronoarabinoxylans.. Its pathway is glycan degradation; xylan degradation. In terms of biological role, catalyzes the depolymerization of methylglucuronoxylan (MeGAXn). It cleaves the beta-1,4-xylosidic bond penultimate to that linking carbon one of the xylose residue substituted with alpha-1,2-linked 4-O-methyl-D-glucuronate (MeGA). This is Glucuronoxylanase XynC (xynC) from Bacillus subtilis.